A 64-amino-acid polypeptide reads, in one-letter code: Large ribosomal subunit protein bL33 (64 aa).

Belongs to the bacterial ribosomal protein bL33 family.

The chain is Large ribosomal subunit protein bL33 from Synechococcus sp. (strain WH7803).